The primary structure comprises 346 residues: N-acetyl-gamma-glutamyl-phosphate reductase (346 aa).

The active site involves Cys-151.

Belongs to the NAGSA dehydrogenase family. Type 1 subfamily.

It is found in the cytoplasm. It catalyses the reaction N-acetyl-L-glutamate 5-semialdehyde + phosphate + NADP(+) = N-acetyl-L-glutamyl 5-phosphate + NADPH + H(+). Its pathway is amino-acid biosynthesis; L-arginine biosynthesis; N(2)-acetyl-L-ornithine from L-glutamate: step 3/4. In terms of biological role, catalyzes the NADPH-dependent reduction of N-acetyl-5-glutamyl phosphate to yield N-acetyl-L-glutamate 5-semialdehyde. The protein is N-acetyl-gamma-glutamyl-phosphate reductase of Ehrlichia chaffeensis (strain ATCC CRL-10679 / Arkansas).